A 333-amino-acid chain; its full sequence is L-asparagine oxygenase (333 aa).

2 residues coordinate L-asparagine: E125 and N146. 2 residues coordinate Fe cation: H155 and E157. The L-asparagine site is built by E157 and N158. H287 is a binding site for Fe cation. 2-oxoglutarate is bound at residue R301. Position 305 (R305) interacts with L-asparagine.

The protein belongs to the clavaminate synthase family. The cofactor is Fe(2+).

It carries out the reaction L-asparagine + 2-oxoglutarate + O2 = (2S,3S)-3-hydroxyasparagine + succinate + CO2. It participates in antibiotic biosynthesis; calcium-dependent antibiotic biosynthesis. Catalyzes the 3-hydroxylation of L-asparagine to (2S,3S)-3-hydroxyasparagine. The 3-hydroxylated asparagine produced is incorporated at position 9 during the biosynthesis of the non-ribosomally synthesized calcium-dependent antibiotic (CDA), a 11-residue acidic lipopeptide lactone. Is able to hydroxylate only free L-asparagine, since it hydroxylates neither a CDA analog with unmodified Asn at position 9 nor a peptidyl-carrier-protein (PCP)-bound asparagine. Is not active toward D-asparagine. The chain is L-asparagine oxygenase (asnO) from Streptomyces coelicolor (strain ATCC BAA-471 / A3(2) / M145).